Consider the following 211-residue polypeptide: Imidazole glycerol phosphate synthase subunit HisH (211 aa).

Residues 1–211 (MIGIIDYGMG…ASIIEGKGSM (211 aa)) enclose the Glutamine amidotransferase type-1 domain. The active-site Nucleophile is Cys-79. Active-site residues include His-186 and Glu-188.

In terms of assembly, heterodimer of HisH and HisF.

It is found in the cytoplasm. It catalyses the reaction 5-[(5-phospho-1-deoxy-D-ribulos-1-ylimino)methylamino]-1-(5-phospho-beta-D-ribosyl)imidazole-4-carboxamide + L-glutamine = D-erythro-1-(imidazol-4-yl)glycerol 3-phosphate + 5-amino-1-(5-phospho-beta-D-ribosyl)imidazole-4-carboxamide + L-glutamate + H(+). It carries out the reaction L-glutamine + H2O = L-glutamate + NH4(+). Its pathway is amino-acid biosynthesis; L-histidine biosynthesis; L-histidine from 5-phospho-alpha-D-ribose 1-diphosphate: step 5/9. In terms of biological role, IGPS catalyzes the conversion of PRFAR and glutamine to IGP, AICAR and glutamate. The HisH subunit catalyzes the hydrolysis of glutamine to glutamate and ammonia as part of the synthesis of IGP and AICAR. The resulting ammonia molecule is channeled to the active site of HisF. The sequence is that of Imidazole glycerol phosphate synthase subunit HisH from Geobacillus sp. (strain WCH70).